The primary structure comprises 764 residues: Elongation factor G, mitochondrial (764 aa).

The N-terminal 23 residues, 1–23 (MIRSLRAVSRLGARGFSSFAAAR), are a transit peptide targeting the mitochondrion. The tr-type G domain occupies 56 to 337 (ARMRNIGISA…AICEYLPDPS (282 aa)). GTP is bound by residues 65 to 72 (AHIDSGKT), 136 to 140 (DTPGH), and 190 to 193 (NKMD).

Belongs to the TRAFAC class translation factor GTPase superfamily. Classic translation factor GTPase family. EF-G/EF-2 subfamily.

The protein resides in the mitochondrion. Its pathway is protein biosynthesis; polypeptide chain elongation. In terms of biological role, mitochondrial GTPase that catalyzes the GTP-dependent ribosomal translocation step during translation elongation. During this step, the ribosome changes from the pre-translocational (PRE) to the post-translocational (POST) state as the newly formed A-site-bound peptidyl-tRNA and P-site-bound deacylated tRNA move to the P and E sites, respectively. Catalyzes the coordinated movement of the two tRNA molecules, the mRNA and conformational changes in the ribosome. The sequence is that of Elongation factor G, mitochondrial from Yarrowia lipolytica (strain CLIB 122 / E 150) (Yeast).